The sequence spans 623 residues: Chaperone protein DnaK (623 aa).

A Phosphothreonine; by autocatalysis modification is found at T197. A compositionally biased stretch (basic and acidic residues) spans 595-615; that stretch reads AENMYKKDEPNTANDKKKKDD. A disordered region spans residues 595-623; that stretch reads AENMYKKDEPNTANDKKKKDDDVIDAEVE.

This sequence belongs to the heat shock protein 70 family.

Acts as a chaperone. The protein is Chaperone protein DnaK of Campylobacter jejuni subsp. jejuni serotype O:6 (strain 81116 / NCTC 11828).